The primary structure comprises 147 residues: uncharacterized protein (147 aa).

The signal sequence occupies residues Met1–Ala21.

This is an uncharacterized protein from Treponema pallidum (strain Nichols).